The sequence spans 396 residues: Putative arsenical pump-driving ATPase 1 (396 aa).

8-15 contacts ATP; that stretch reads GKGGVGKT.

It belongs to the arsA ATPase family.

It carries out the reaction arsenite(in) + ATP + H2O = arsenite(out) + ADP + phosphate + H(+). Its function is as follows. Anion-transporting ATPase. Catalyzes the extrusion of arsenite. The sequence is that of Putative arsenical pump-driving ATPase 1 (arsA1) from Aquifex aeolicus (strain VF5).